We begin with the raw amino-acid sequence, 177 residues long: O-acetyl-ADP-ribose deacetylase (177 aa).

One can recognise a Macro domain in the interval 1–175 (MNSRIHVIHG…LYQRLLTQQG (175 aa)). Residues 11 to 12 (DI), N25, 33 to 35 (GVD), and 122 to 126 (STGVY) each bind substrate. D35 acts as the Proton acceptor in catalysis.

The protein belongs to the MacroD-type family. YmdB subfamily. As to quaternary structure, homodimer. Interacts with RNase III.

It catalyses the reaction 3''-O-acetyl-ADP-D-ribose + H2O = ADP-D-ribose + acetate + H(+). The catalysed reaction is 2''-O-acetyl-ADP-D-ribose + H2O = ADP-D-ribose + acetate + H(+). Functionally, deacetylates O-acetyl-ADP ribose to yield ADP-ribose and free acetate. Down-regulates ribonuclease 3 (RNase III) activity. Acts by interacting directly with the region of the ribonuclease that is required for dimerization/activation. The sequence is that of O-acetyl-ADP-ribose deacetylase from Citrobacter rodentium (strain ICC168) (Citrobacter freundii biotype 4280).